The primary structure comprises 283 residues: Gap junction beta-1 protein (283 aa).

Residues 1–22 (MNWTGLYTLLSGVNRHSTAIGR) are Cytoplasmic-facing. Residues 23 to 45 (VWLSVIFIFRIMVLVVAAESVWG) traverse the membrane as a helical segment. Topologically, residues 46 to 75 (DEKSSFICNTLQPGCNSVCYDHFFPISHVR) are extracellular. A helical transmembrane segment spans residues 76–95 (LWSLQLILVSTPALLVAMHV). Topologically, residues 96 to 130 (AHQQHIEKKMLRLEGHGDPLHLEEVKRHKVHISGT) are cytoplasmic. Residues 131–153 (LWWTYVISVVFRLLFEAVFMYVF) form a helical membrane-spanning segment. The Extracellular segment spans residues 154–191 (YLLYPGYAMVRLVKCEAFPCPNTVDCFVSRPTEKTVFT). A helical membrane pass occupies residues 192–214 (VFMLAASGICIILNVAEVVYLII). Over 215–283 (RACARRAQRR…AEKSDRCSAC (69 aa)) the chain is Cytoplasmic. Phosphoserine is present on residues Ser233, Ser258, Ser266, and Ser277.

This sequence belongs to the connexin family. Beta-type (group I) subfamily. In terms of assembly, a connexon is composed of a hexamer of connexins. Interacts with CNST.

The protein localises to the cell membrane. It localises to the cell junction. It is found in the gap junction. One gap junction consists of a cluster of closely packed pairs of transmembrane channels, the connexons, through which materials of low MW diffuse from one cell to a neighboring cell. This chain is Gap junction beta-1 protein (Gjb1), found in Mus musculus (Mouse).